A 213-amino-acid polypeptide reads, in one-letter code: Adenylate kinase (213 aa).

10–15 provides a ligand contact to ATP; it reads GAGKGT. Residues 30–59 form an NMP region; the sequence is STGDMFRAAMANQTEMGLLAKSYIDKGDLV. AMP-binding positions include Thr-31, Arg-36, 57–59, 86–89, and Gln-93; these read DLV and GYPR. The LID stretch occupies residues 127 to 160; it reads GRIIHKKTGETFHKIFNPPAGDYDENDYYQREDD. ATP-binding positions include Arg-128 and 137 to 138; that span reads TF. Positions 157 and 168 each coordinate AMP. Gln-196 serves as a coordination point for ATP.

This sequence belongs to the adenylate kinase family. As to quaternary structure, monomer.

The protein localises to the cytoplasm. It carries out the reaction AMP + ATP = 2 ADP. Its pathway is purine metabolism; AMP biosynthesis via salvage pathway; AMP from ADP: step 1/1. In terms of biological role, catalyzes the reversible transfer of the terminal phosphate group between ATP and AMP. Plays an important role in cellular energy homeostasis and in adenine nucleotide metabolism. This chain is Adenylate kinase, found in Streptococcus uberis (strain ATCC BAA-854 / 0140J).